A 113-amino-acid polypeptide reads, in one-letter code: Hydrogenase maturation factor HypA (113 aa).

Histidine 2 lines the Ni(2+) pocket. Zn(2+) contacts are provided by cysteine 73, cysteine 76, cysteine 89, and cysteine 92.

Belongs to the HypA/HybF family.

Involved in the maturation of [NiFe] hydrogenases. Required for nickel insertion into the metal center of the hydrogenase. This chain is Hydrogenase maturation factor HypA, found in Acidithiobacillus ferrooxidans (strain ATCC 23270 / DSM 14882 / CIP 104768 / NCIMB 8455) (Ferrobacillus ferrooxidans (strain ATCC 23270)).